The sequence spans 299 residues: UDP-N-acetylenolpyruvoylglucosamine reductase (299 aa).

The FAD-binding PCMH-type domain occupies 19 to 192 (LGGQALAEVR…AAVTLQLRRS (174 aa)). Arg169 is an active-site residue. Cys221 (proton donor) is an active-site residue. Glu292 is an active-site residue.

It belongs to the MurB family. It depends on FAD as a cofactor.

The protein resides in the cytoplasm. The enzyme catalyses UDP-N-acetyl-alpha-D-muramate + NADP(+) = UDP-N-acetyl-3-O-(1-carboxyvinyl)-alpha-D-glucosamine + NADPH + H(+). It functions in the pathway cell wall biogenesis; peptidoglycan biosynthesis. In terms of biological role, cell wall formation. This Oleidesulfovibrio alaskensis (strain ATCC BAA-1058 / DSM 17464 / G20) (Desulfovibrio alaskensis) protein is UDP-N-acetylenolpyruvoylglucosamine reductase.